The primary structure comprises 236 residues: UPF0173 metal-dependent hydrolase DSY1309 (236 aa).

This sequence belongs to the UPF0173 family.

The protein is UPF0173 metal-dependent hydrolase DSY1309 of Desulfitobacterium hafniense (strain Y51).